A 207-amino-acid chain; its full sequence is Ribonuclease HII (207 aa).

The 190-residue stretch at 12 to 201 folds into the RNase H type-2 domain; it reads DLVAGVDEVG…VRAAWEAREG (190 aa). 3 residues coordinate a divalent metal cation: Asp18, Glu19, and Asp110.

It belongs to the RNase HII family. Mn(2+) serves as cofactor. It depends on Mg(2+) as a cofactor.

It localises to the cytoplasm. The catalysed reaction is Endonucleolytic cleavage to 5'-phosphomonoester.. Functionally, endonuclease that specifically degrades the RNA of RNA-DNA hybrids. In Pseudomonas putida (strain GB-1), this protein is Ribonuclease HII.